We begin with the raw amino-acid sequence, 157 residues long: Transcription elongation factor GreA (157 aa).

Residues Ala46–Asp67 adopt a coiled-coil conformation.

It belongs to the GreA/GreB family.

In terms of biological role, necessary for efficient RNA polymerase transcription elongation past template-encoded arresting sites. The arresting sites in DNA have the property of trapping a certain fraction of elongating RNA polymerases that pass through, resulting in locked ternary complexes. Cleavage of the nascent transcript by cleavage factors such as GreA or GreB allows the resumption of elongation from the new 3'terminus. GreA releases sequences of 2 to 3 nucleotides. The polypeptide is Transcription elongation factor GreA (Rhodospirillum rubrum (strain ATCC 11170 / ATH 1.1.1 / DSM 467 / LMG 4362 / NCIMB 8255 / S1)).